The chain runs to 208 residues: Protein-L-isoaspartate O-methyltransferase (208 aa).

S59 is a catalytic residue.

It belongs to the methyltransferase superfamily. L-isoaspartyl/D-aspartyl protein methyltransferase family.

It localises to the cytoplasm. It carries out the reaction [protein]-L-isoaspartate + S-adenosyl-L-methionine = [protein]-L-isoaspartate alpha-methyl ester + S-adenosyl-L-homocysteine. Catalyzes the methyl esterification of L-isoaspartyl residues in peptides and proteins that result from spontaneous decomposition of normal L-aspartyl and L-asparaginyl residues. It plays a role in the repair and/or degradation of damaged proteins. This chain is Protein-L-isoaspartate O-methyltransferase, found in Salmonella paratyphi A (strain ATCC 9150 / SARB42).